Here is a 359-residue protein sequence, read N- to C-terminus: Histidinol-phosphate aminotransferase 1 (359 aa).

Lysine 216 is subject to N6-(pyridoxal phosphate)lysine.

Belongs to the class-II pyridoxal-phosphate-dependent aminotransferase family. Histidinol-phosphate aminotransferase subfamily. In terms of assembly, homodimer. Requires pyridoxal 5'-phosphate as cofactor.

It catalyses the reaction L-histidinol phosphate + 2-oxoglutarate = 3-(imidazol-4-yl)-2-oxopropyl phosphate + L-glutamate. It functions in the pathway amino-acid biosynthesis; L-histidine biosynthesis; L-histidine from 5-phospho-alpha-D-ribose 1-diphosphate: step 7/9. The protein is Histidinol-phosphate aminotransferase 1 (hisC1) of Caulobacter vibrioides (strain ATCC 19089 / CIP 103742 / CB 15) (Caulobacter crescentus).